The chain runs to 259 residues: Deoxyribose-phosphate aldolase (259 aa).

The active-site Proton donor/acceptor is the Asp102. Lys167 (schiff-base intermediate with acetaldehyde) is an active-site residue. Lys201 functions as the Proton donor/acceptor in the catalytic mechanism.

This sequence belongs to the DeoC/FbaB aldolase family. DeoC type 2 subfamily.

It localises to the cytoplasm. The enzyme catalyses 2-deoxy-D-ribose 5-phosphate = D-glyceraldehyde 3-phosphate + acetaldehyde. It participates in carbohydrate degradation; 2-deoxy-D-ribose 1-phosphate degradation; D-glyceraldehyde 3-phosphate and acetaldehyde from 2-deoxy-alpha-D-ribose 1-phosphate: step 2/2. Functionally, catalyzes a reversible aldol reaction between acetaldehyde and D-glyceraldehyde 3-phosphate to generate 2-deoxy-D-ribose 5-phosphate. This Photorhabdus laumondii subsp. laumondii (strain DSM 15139 / CIP 105565 / TT01) (Photorhabdus luminescens subsp. laumondii) protein is Deoxyribose-phosphate aldolase.